A 792-amino-acid chain; its full sequence is RAD50-interacting protein 1 (792 aa).

The segment at 1–22 (MLPAGEIGASPAAPCCSESGDE) is disordered. Residues 103–124 (IRSALKNAEESKQFLNQFLEQE) adopt a coiled-coil conformation. Residues 220–792 (WHKILKDKLT…LRTNWPNTGK (573 aa)) form the RINT1/TIP20 domain.

It belongs to the RINT1 family. In terms of assembly, component of the NRZ complex composed of NBAS, ZW10 and RINT1/TIP20L; NRZ associates with SNAREs STX18, USE1L, BNIP1/SEC20L and SEC22B (the assembly has been described as syntaxin 18 complex). Interacts directly with BNIP1/SEC20L and ZW10. Interacts with UVRAG. Interacts with RAD50 during late S and G2/M phases. Interacts with RBL2, preferentially with the active, hypophosphorylated form.

The protein resides in the cytoplasm. The protein localises to the endoplasmic reticulum membrane. Involved in regulation of membrane traffic between the Golgi and the endoplasmic reticulum (ER); the function is proposed to depend on its association in the NRZ complex which is believed to play a role in SNARE assembly at the ER. May play a role in cell cycle checkpoint control. Essential for telomere length control. The polypeptide is RAD50-interacting protein 1 (RINT1) (Homo sapiens (Human)).